We begin with the raw amino-acid sequence, 296 residues long: Enoyl-CoA hydratase AFT3-1 (296 aa).

The short motif at 294 to 296 (PKL) is the Peroxisomal targeting signal type 1 element.

Belongs to the enoyl-CoA hydratase/isomerase family.

It localises to the peroxisome. The catalysed reaction is a (3S)-3-hydroxyacyl-CoA = a (2E)-enoyl-CoA + H2O. It catalyses the reaction a 4-saturated-(3S)-3-hydroxyacyl-CoA = a (3E)-enoyl-CoA + H2O. Its pathway is mycotoxin biosynthesis. Its function is as follows. Enoyl-CoA hydratase; part of the gene clusters that mediate the biosynthesis of the host-selective toxins (HSTs) AF-toxins responsible for Alternaria black spot of strawberry disease by the strawberry pathotype. AF-toxin I and III are valine derivatives of 2,3-dyhydroxy-isovaleric acid and 2-hydroxy-isovaleric acid respectively, while AF II is an isoleucine derivative of 2-hydroxy-valeric acid. These derivatives are bound to a 9,10-epoxy-8-hydroxy-9-methyl-decatrienoic acid (EDA) moiety. On cellular level, AF-toxins affect plasma membrane of susceptible cells and cause a sudden increase in loss of K(+) after a few minutes of toxin treatment. The aldo-keto reductase AFTS1 catalyzes the conversion of 2-keto-isovaleric acid (2-KIV) to 2-hydroxy-isovaleric acid (2-HIV) by reduction of its ketone to an alcohol. The acyl-CoA ligase AFT1, the hydrolase AFT2 and the enoyl-CoA hydratases AFT3 and AFT6, but also the polyketide synthase AFT9, the acyl-CoA dehydrogenase AFT10, the cytochrome P450 monooxygenase AFT11 and the oxidoreductase AFT12 are all involved in the biosynthesis of the AK-, AF- and ACT-toxin common EDA structural moiety. The exact function of each enzyme, and of additional enzymes identified within the AF-toxin clusters have still to be determined. This is Enoyl-CoA hydratase AFT3-1 (AFT3-1) from Alternaria alternata (Alternaria rot fungus).